The following is a 465-amino-acid chain: Putative F-box/FBD/LRR-repeat protein At1g22000 (465 aa).

The 47-residue stretch at 28-74 folds into the F-box domain; the sequence is ETRICALPDDLLLQILPHVPTKEAVATSILSKQWRYVWLMLPKLEFK. LRR repeat units follow at residues 154-181, 182-207, 210-230, 248-273, and 339-365; these read CLTL…SLHY, VVYK…SVHS, DDNL…NYDE, NEVE…HLSE, and ISLV…TIDN. The 52-residue stretch at 373-424 folds into the FBD domain; it reads SWNQPSSIPGCLLSHLETFRWRGYGGREDAKKLLMTYILANSKCLKTVEISL.

The protein is Putative F-box/FBD/LRR-repeat protein At1g22000 of Arabidopsis thaliana (Mouse-ear cress).